We begin with the raw amino-acid sequence, 640 residues long: DNA mismatch repair protein MutL (640 aa).

The disordered stretch occupies residues 343–389 (TKNTATDQRAENLEVKPDSKEKELQPKESQHPRLVACDLPSGKIMPP). A compositionally biased stretch (basic and acidic residues) spans 350–373 (QRAENLEVKPDSKEKELQPKESQH).

It belongs to the DNA mismatch repair MutL/HexB family.

Its function is as follows. This protein is involved in the repair of mismatches in DNA. It is required for dam-dependent methyl-directed DNA mismatch repair. May act as a 'molecular matchmaker', a protein that promotes the formation of a stable complex between two or more DNA-binding proteins in an ATP-dependent manner without itself being part of a final effector complex. The sequence is that of DNA mismatch repair protein MutL from Desulforamulus reducens (strain ATCC BAA-1160 / DSM 100696 / MI-1) (Desulfotomaculum reducens).